The chain runs to 206 residues: MGNEFDISNAGGLVPMVVEQNARGERAYDIYSRLLKERVIFLIGPVEDYMANLVVAQMLFLESENPDKDIHLYINSPGGSVTAGMSIYDTMQFIKPDVSTVCVGQAASMGALLLAGGAAGKRYCLPHSRMMIHQPLGGYQGQAADIEIHTKEILNIRQQLNEILAKHTGQDAETVARDTDRDNFMNGTQAVEYGLIDAMLDKRPVS.

Ser-108 functions as the Nucleophile in the catalytic mechanism. Residue His-133 is part of the active site.

It belongs to the peptidase S14 family. In terms of assembly, fourteen ClpP subunits assemble into 2 heptameric rings which stack back to back to give a disk-like structure with a central cavity, resembling the structure of eukaryotic proteasomes.

It is found in the cytoplasm. It catalyses the reaction Hydrolysis of proteins to small peptides in the presence of ATP and magnesium. alpha-casein is the usual test substrate. In the absence of ATP, only oligopeptides shorter than five residues are hydrolyzed (such as succinyl-Leu-Tyr-|-NHMec, and Leu-Tyr-Leu-|-Tyr-Trp, in which cleavage of the -Tyr-|-Leu- and -Tyr-|-Trp bonds also occurs).. Its function is as follows. Cleaves peptides in various proteins in a process that requires ATP hydrolysis. Has a chymotrypsin-like activity. Plays a major role in the degradation of misfolded proteins. The polypeptide is ATP-dependent Clp protease proteolytic subunit (Chromohalobacter salexigens (strain ATCC BAA-138 / DSM 3043 / CIP 106854 / NCIMB 13768 / 1H11)).